We begin with the raw amino-acid sequence, 688 residues long: Potassium-transporting ATPase ATP-binding subunit (688 aa).

The next 4 membrane-spanning stretches (helical) occupy residues 34–54, 62–82, 219–239, and 260–280; these read PVMF…LAIL, AMFT…ANMA, VALT…TATL, and VLVA…LSAI. D313 functions as the 4-aspartylphosphate intermediate in the catalytic mechanism. ATP-binding positions include D350, E354, 383 to 390, and K401; that span reads FSAQTRMS. D524 and D528 together coordinate Mg(2+). A run of 3 helical transmembrane segments spans residues 594 to 614, 622 to 642, and 662 to 682; these read FAII…LNIM, AILS…PLAL, and IYGL…DLLL.

Belongs to the cation transport ATPase (P-type) (TC 3.A.3) family. Type IA subfamily. In terms of assembly, the system is composed of three essential subunits: KdpA, KdpB and KdpC.

It localises to the cell inner membrane. The enzyme catalyses K(+)(out) + ATP + H2O = K(+)(in) + ADP + phosphate + H(+). In terms of biological role, part of the high-affinity ATP-driven potassium transport (or Kdp) system, which catalyzes the hydrolysis of ATP coupled with the electrogenic transport of potassium into the cytoplasm. This subunit is responsible for energy coupling to the transport system and for the release of the potassium ions to the cytoplasm. In Yersinia pseudotuberculosis serotype I (strain IP32953), this protein is Potassium-transporting ATPase ATP-binding subunit.